The sequence spans 92 residues: Envelope glycoprotein J (92 aa).

The signal sequence occupies residues 1-21 (MSLRAVWHLGLLGSLVGAVLA). Topologically, residues 22-49 (ATHRGPAANTTDPLTHAPVSPHPSPLGG) are extracellular. The N-linked (GlcNAc...) asparagine; by host glycan is linked to N30. Residues 50 to 70 (FAVPLVVGGLCAVVLGAACLL) form a helical membrane-spanning segment. Over 71–92 (ELLRRTCRGWGRYHPYMDPVVV) the chain is Cytoplasmic.

Belongs to the alphaherpesvirinae glycoprotein J family.

It is found in the host Golgi apparatus membrane. Its subcellular location is the host endoplasmic reticulum membrane. It localises to the host endosome membrane. Its function is as follows. Inhibits host cell apoptosis. Induces an increase in reactive oxygen species (ROS) in the host cell. This Homo sapiens (Human) protein is Envelope glycoprotein J (gJ).